The sequence spans 236 residues: Sugar fermentation stimulation protein homolog (236 aa).

The protein belongs to the SfsA family.

The protein is Sugar fermentation stimulation protein homolog of Desulfotalea psychrophila (strain LSv54 / DSM 12343).